A 473-amino-acid chain; its full sequence is tRNA-2-methylthio-N(6)-dimethylallyladenosine synthase (473 aa).

The 118-residue stretch at 3-120 folds into the MTTase N-terminal domain; sequence MKLHVKTWGC…LPEMIKEVQE (118 aa). [4Fe-4S] cluster-binding residues include Cys-12, Cys-49, Cys-83, Cys-157, Cys-161, and Cys-164. In terms of domain architecture, Radical SAM core spans 143 to 375; that stretch reads KADGATAFVS…QDRIQQQSQG (233 aa). The TRAM domain occupies 378-441; the sequence is RKMVGSVQRI…TNSIRGKFIR (64 aa).

This sequence belongs to the methylthiotransferase family. MiaB subfamily. In terms of assembly, monomer. [4Fe-4S] cluster is required as a cofactor.

The protein resides in the cytoplasm. It carries out the reaction N(6)-dimethylallyladenosine(37) in tRNA + (sulfur carrier)-SH + AH2 + 2 S-adenosyl-L-methionine = 2-methylsulfanyl-N(6)-dimethylallyladenosine(37) in tRNA + (sulfur carrier)-H + 5'-deoxyadenosine + L-methionine + A + S-adenosyl-L-homocysteine + 2 H(+). Catalyzes the methylthiolation of N6-(dimethylallyl)adenosine (i(6)A), leading to the formation of 2-methylthio-N6-(dimethylallyl)adenosine (ms(2)i(6)A) at position 37 in tRNAs that read codons beginning with uridine. In Psychromonas ingrahamii (strain DSM 17664 / CCUG 51855 / 37), this protein is tRNA-2-methylthio-N(6)-dimethylallyladenosine synthase.